Consider the following 796-residue polypeptide: Protein tyrosine phosphatase domain-containing protein 1 (796 aa).

The Tyrosine-protein phosphatase domain maps to 126 to 297 (YSSWVTDNIL…LIPLRNIFSC (172 aa)). The Phosphocysteine intermediate role is filled by C234. S435 and S437 each carry phosphoserine.

It belongs to the protein-tyrosine phosphatase family. Non-receptor class PTPDC1 subfamily.

Its function is as follows. May play roles in cilia formation and/or maintenance. The chain is Protein tyrosine phosphatase domain-containing protein 1 (PTPDC1) from Bos taurus (Bovine).